The primary structure comprises 217 residues: tRNA (guanine-N(7)-)-methyltransferase (217 aa).

Positions 44, 69, 96, and 118 each coordinate S-adenosyl-L-methionine. Aspartate 118 is a catalytic residue. Lysine 122 provides a ligand contact to substrate. The interval 124-129 is interaction with RNA; it reads RHEKRR. Substrate is bound by residues aspartate 154 and 193–196; that span reads TEYE.

Belongs to the class I-like SAM-binding methyltransferase superfamily. TrmB family.

The catalysed reaction is guanosine(46) in tRNA + S-adenosyl-L-methionine = N(7)-methylguanosine(46) in tRNA + S-adenosyl-L-homocysteine. It functions in the pathway tRNA modification; N(7)-methylguanine-tRNA biosynthesis. Catalyzes the formation of N(7)-methylguanine at position 46 (m7G46) in tRNA. The polypeptide is tRNA (guanine-N(7)-)-methyltransferase (Lactococcus lactis subsp. cremoris (strain SK11)).